We begin with the raw amino-acid sequence, 241 residues long: Proteasome subunit alpha (241 aa).

It belongs to the peptidase T1A family. In terms of assembly, the 20S proteasome core is composed of 14 alpha and 14 beta subunits that assemble into four stacked heptameric rings, resulting in a barrel-shaped structure. The two inner rings, each composed of seven catalytic beta subunits, are sandwiched by two outer rings, each composed of seven alpha subunits. The catalytic chamber with the active sites is on the inside of the barrel. Has a gated structure, the ends of the cylinder being occluded by the N-termini of the alpha-subunits. Is capped at one or both ends by the proteasome regulatory ATPase, PAN.

It is found in the cytoplasm. Its activity is regulated as follows. The formation of the proteasomal ATPase PAN-20S proteasome complex, via the docking of the C-termini of PAN into the intersubunit pockets in the alpha-rings, triggers opening of the gate for substrate entry. Interconversion between the open-gate and close-gate conformations leads to a dynamic regulation of the 20S proteasome proteolysis activity. Its function is as follows. Component of the proteasome core, a large protease complex with broad specificity involved in protein degradation. This Saccharolobus islandicus (strain M.16.4 / Kamchatka #3) (Sulfolobus islandicus) protein is Proteasome subunit alpha.